The chain runs to 256 residues: Protein YIPF7 (256 aa).

The Cytoplasmic portion of the chain corresponds to 1-125 (MSNLAQFDSD…VDGSIMNETD (125 aa)). Composition is skewed to polar residues over residues 18–31 (IDNQ…SNAY) and 38–48 (RKQQAGEQPQP). The disordered stretch occupies residues 18 to 48 (IDNQEQSGNDSNAYGNLYGSRKQQAGEQPQP). Residues 126 to 146 (LTGPILFCVALGATLLLAGKV) form a helical membrane-spanning segment. Residue Q147 is a topological domain, extracellular. Residues 148–168 (FGYVYGMSAIGCLVIHALLNL) form a helical membrane-spanning segment. Over 169 to 172 (MSSS) the chain is Cytoplasmic. The helical transmembrane segment at 173–193 (GVSYGCVASVLGYCLLPMVIL) threads the bilayer. The Extracellular portion of the chain corresponds to 194–196 (SGC). A helical membrane pass occupies residues 197 to 217 (AMFFSLQGIFGIMSSLVIIGW). Topologically, residues 218–235 (CSLSASKIFIAALHMEGQ) are cytoplasmic. A helical transmembrane segment spans residues 236–256 (QLLVAYPCAILYGLFALLTIF).

It belongs to the YIP1 family.

It is found in the endoplasmic reticulum membrane. Its subcellular location is the golgi apparatus. The protein resides in the cis-Golgi network membrane. It localises to the trans-Golgi network membrane. In Homo sapiens (Human), this protein is Protein YIPF7 (YIPF7).